The chain runs to 445 residues: UPF0210 protein SPH_0352 (445 aa).

It belongs to the UPF0210 family. As to quaternary structure, homodimer.

The chain is UPF0210 protein SPH_0352 from Streptococcus pneumoniae (strain Hungary19A-6).